We begin with the raw amino-acid sequence, 397 residues long: Lymphoid enhancer-binding factor 1 (397 aa).

The tract at residues 1-60 is CTNNB1-binding; sequence MPQLSGGGGGGDPELCATDEMIPFKDEGDPQKEKIFAEISHPEEEGDLADIKSSLVNESE. Lysine 25 is covalently cross-linked (Glycyl lysine isopeptide (Lys-Gly) (interchain with G-Cter in SUMO)). The interval 59–102 is disordered; it reads SEIIPASNGHEVVRQAPSSQEPYHDKAREHPDEGKHPDGGLYNK. Residues 80–96 show a composition bias toward basic and acidic residues; it reads PYHDKAREHPDEGKHPD. Serine 130 bears the Phosphoserine mark. At threonine 153 the chain carries Phosphothreonine; by NLK. Serine 164 carries the post-translational modification Phosphoserine; by NLK. Disordered stretches follow at residues 164–191 and 266–296; these read SPGSHPSHIPSDVNSKQGMSRHPPAPEI and VKQEHPHTDSDLMHVKPQHEQRKEQEPKRPH. Lysine 267 participates in a covalent cross-link: Glycyl lysine isopeptide (Lys-Gly) (interchain with G-Cter in SUMO). Basic and acidic residues predominate over residues 267–294; it reads KQEHPHTDSDLMHVKPQHEQRKEQEPKR. The HMG box DNA-binding region spans 297 to 365; that stretch reads IKKPLNAFML…LHMQLYPGWS (69 aa). The disordered stretch occupies residues 367–397; the sequence is RDNYGKKKKRKREKLQESTSGTGPRMTAAYI.

Belongs to the TCF/LEF family. As to quaternary structure, binds the armadillo repeat of CTNNB1 and forms a stable complex. Binds TLE1, ALYREF/THOC4, MDFI and MDFIC. Interacts with NLK. Interacts with EP300 and PIASG. Interacts with DAZAP2. Post-translationally, phosphorylated at Thr-153 and/or Ser-164 by NLK. Phosphorylation by NLK at these sites represses LEF1-mediated transcriptional activation of target genes of the canonical Wnt signaling pathway. As to expression, expressed in Vgamma1.1 and Vgamma2 gamma-delta T-cells, however not expressed in gamma-delta thymocytes fated for Il17a expression (at protein level). Expressed in alpha-beta T-cell lineages. Expressed in the thymus. Found in distinct epithelial cell compartments of the skin and is abundant in the hair-producing progenitors of the follicle.

The protein localises to the nucleus. Its function is as follows. Transcription factor that binds DNA in a sequence-specific manner. Participates in the Wnt signaling pathway. Activates transcription of target genes in the presence of CTNNB1 and EP300. PIASG antagonizes both Wnt-dependent and Wnt-independent activation by LEF1. TLE1, TLE2, TLE3 and TLE4 repress transactivation mediated by LEF1 and CTNNB1. Regulates T-cell receptor alpha enhancer function. Required for IL17A expressing gamma-delta T-cell maturation and development, via binding to regulator loci of BLK to modulate expression. Acts as a positive regulator of odontoblast differentiation during mesenchymal tooth germ formation, expression is repressed during the bell stage by MSX1-mediated inhibition of CTNNB1 signaling. May play a role in hair cell differentiation and follicle morphogenesis. The sequence is that of Lymphoid enhancer-binding factor 1 from Mus musculus (Mouse).